The following is a 445-amino-acid chain: MKTPKNDVYTVSRLNGEVRQLLEGQLGRIWLNAEISNFAAPGSGHWYLTLKDNFSQIRCAMFKGRNQAVTFRPANGQQVLVKGNISVYEPRGDYQLLIESMLPAGDGLLAQQYEALKMKLAAEGLFASDTKRSLPANIQRIGVVTSPTGAAIRDILHVLARRDASIEVIIYPTPVQGTDAAKSICDAINLANSRREVDVLLVTRGGGSLEDLWSFNDEGLAHTLYNSGIPVVSAVGHEVDMTISDYVADLRAPTPSAGAELLSKDADNKAQKLLSQLSRLKQSWQHYQLKKQNQLQACEHRLQKQDPQRRLQMYEQSFDEMQLRLQQAMQTKLHAYTLKQQNLSSRLASQSPQHRLDLEAQRLSYLSAKLNGAMIDKLKMSEQRLAHRAQQLDTVSPLATLSRGYSITLTGEGKVVQSPSDTCVGDTLTTRLRDGSVTSTVVEVG.

It belongs to the XseA family. Heterooligomer composed of large and small subunits.

Its subcellular location is the cytoplasm. The catalysed reaction is Exonucleolytic cleavage in either 5'- to 3'- or 3'- to 5'-direction to yield nucleoside 5'-phosphates.. In terms of biological role, bidirectionally degrades single-stranded DNA into large acid-insoluble oligonucleotides, which are then degraded further into small acid-soluble oligonucleotides. This is Exodeoxyribonuclease 7 large subunit from Shewanella halifaxensis (strain HAW-EB4).